The sequence spans 100 residues: Large ribosomal subunit protein uL23 (100 aa).

The protein belongs to the universal ribosomal protein uL23 family. Part of the 50S ribosomal subunit. Contacts protein L29, and trigger factor when it is bound to the ribosome.

In terms of biological role, one of the early assembly proteins it binds 23S rRNA. One of the proteins that surrounds the polypeptide exit tunnel on the outside of the ribosome. Forms the main docking site for trigger factor binding to the ribosome. The chain is Large ribosomal subunit protein uL23 from Xylella fastidiosa (strain 9a5c).